The following is a 138-amino-acid chain: Large-conductance mechanosensitive channel (138 aa).

A run of 3 helical transmembrane segments spans residues 15-35 (VDLA…NSVV), 38-58 (IFMP…MFIQ), and 80-100 (GNFI…FFLV).

The protein belongs to the MscL family. As to quaternary structure, homopentamer.

Its subcellular location is the cell inner membrane. Functionally, channel that opens in response to stretch forces in the membrane lipid bilayer. May participate in the regulation of osmotic pressure changes within the cell. The polypeptide is Large-conductance mechanosensitive channel (Bartonella bacilliformis (strain ATCC 35685 / KC583 / Herrer 020/F12,63)).